A 603-amino-acid polypeptide reads, in one-letter code: Coagulation factor XII (603 aa).

The N-terminal stretch at 1-18 is a signal peptide; it reads GRLLLGSLLVSLESALSA. Residues 41–89 enclose the Fibronectin type-II domain; that stretch reads VTGEPCYFPFQYNRQLYHHCIHKGRPGPRPWCATTPNFDQDQQWAYCLE. Intrachain disulfides connect Cys46–Cys72, Cys60–Cys87, Cys97–Cys109, Cys103–Cys118, Cys120–Cys129, Cys134–Cys162, Cys160–Cys169, Cys177–Cys188, Cys182–Cys197, Cys199–Cys208, Cys216–Cys294, Cys237–Cys276, Cys265–Cys289, Cys345–Cys472, Cys383–Cys399, Cys391–Cys461, Cys422–Cys425, Cys488–Cys557, Cys520–Cys536, and Cys547–Cys578. Positions 93-130 constitute an EGF-like 1 domain; it reads VKDHCSKHNPCQRGGICVNTLSSPHCLCPDHLTGKHCQ. The Fibronectin type-I domain occupies 132–172; that stretch reads EKCFEPQLHRFFHENEIWFRTGPAGVAKCHCKGPDAHCKQM. In terms of domain architecture, EGF-like 2 spans 173–209; it reads HSQECQTNPCLNGGRCLEVEGHHLCDCPMGYTGPFCD. The region spanning 216–294 is the Kringle domain; that stretch reads CYEGRGVSYR…SWEYCDLAQC (79 aa). Residues Asn248 and Asn270 are each glycosylated (N-linked (GlcNAc...) asparagine). Residues 359–602 enclose the Peptidase S1 domain; the sequence is IVGGLVALPG…YLTWIQKHTA (244 aa). Residue His398 is the Charge relay system of the active site. Asn419 carries N-linked (GlcNAc...) asparagine glycosylation. The active-site Charge relay system is Asp447. The active-site Charge relay system is the Ser551.

Belongs to the peptidase S1 family. Interacts with HRG; the interaction, which is enhanced in the presence of zinc ions and inhibited by heparin-binding, inhibits factor XII autoactivation and contact-initiated coagulation. Post-translationally, O- and N-glycosylated.

The protein resides in the secreted. The enzyme catalyses Selective cleavage of Arg-|-Ile bonds in factor VII to form factor VIIa and factor XI to form factor XIa.. With respect to regulation, activity is promoted in the presence of negatively charged surfaces. In terms of biological role, factor XII is a serum glycoprotein that participates in the initiation of blood coagulation, fibrinolysis, and the generation of bradykinin and angiotensin. Prekallikrein is cleaved by factor XII to form kallikrein, which then cleaves factor XII first to alpha-factor XIIa and then trypsin cleaves it to beta-factor XIIa. Alpha-factor XIIa activates factor XI to factor XIa. This Cavia porcellus (Guinea pig) protein is Coagulation factor XII (F12).